The sequence spans 184 residues: Glutathione-regulated potassium-efflux system ancillary protein KefG (184 aa).

The protein belongs to the NAD(P)H dehydrogenase (quinone) family. KefG subfamily. As to quaternary structure, interacts with KefB.

The protein localises to the cell inner membrane. It carries out the reaction a quinone + NADH + H(+) = a quinol + NAD(+). The catalysed reaction is a quinone + NADPH + H(+) = a quinol + NADP(+). Its function is as follows. Regulatory subunit of a potassium efflux system that confers protection against electrophiles. Required for full activity of KefB. The polypeptide is Glutathione-regulated potassium-efflux system ancillary protein KefG (Escherichia coli O8 (strain IAI1)).